The following is a 969-amino-acid chain: MTFALGQRWISDTESDLGLGTVVAMDARTVTLMFAASEENRVYARNDAPVTRVTFNVGDVIDCQEGWSLKVEEVLEDEGLYTYFGTREDTQETAVVLREIFLSNQIRFNKPQDKLYAGQIDRMDNFVLRYRALTNQFEQHKSPMRGLCGMRAGLIPHQLYIAHEVGRRHAPRVLLADEVGLGKTIEAGMIIHQQVLSGRAERILIVVPETLQHQWLVEMMRRFNLHFSIFDEERCIEAFADAENPFDTQQYVLCSLDFLRKSRKRFEQALEGEWDLLVVDEAHHLEWSQDKPSREYQVVEGLAERTPGVLLLTATPEQLGRESHFARLRLLDPDRFYDYEAFVEEEEQYAPVADAITSLFSGEKLPDEAKNQITELLSEQDVEPLFRIIESNSDEEAKASARQELIDNLMDRHGTGRVLFRNTRAAIKGFPTRNVHLMPMDIPQQYTTSMRVAGMIGGKMSSEARAMKNLYPEEIFQEFEGDDASWWQFDSRVNWLLEKVKEKRGEKILVIASRASTALQLEQALREREGIRATVFHEGMSILERDKAAAYFAQEEGGAQVLICSEIGSEGRNFQFANQLVMFDLPFNPDLLEQRIGRLDRIGQNRDIDIHVPYLKGTSQAILARWFDEGLNAFAETCPTGRAVYDKYSDALIEILASGDTSTLDEIIEESAKLNKELKSQLEQGRDRLLEMHSNGGEKAQQIVEKIESTDGDTNLVTFALSLFDTIGLNQDDKGENALVVTPSEHMMVPSYPGLPYEGATITFDRDTALSREDMHFISWEHPMIQGGIDLLMSEGVGTSAVSLLKNKALPVGTILLELIYAVDAQAPKRSGITRFLPKTPIRLMMDSRGNDLSAQVEFEGFNRQLSPVNRHLGSKLVTSVQKDVHRLIEAGDVLVEEKVEAVRKQAQQDMQQSLNTELERLQALKAVNPNIRDEEIEAIEAQIKELTGYINQAQVQLDSLRLIVVSHN.

Positions Glu164–Asp334 constitute a Helicase ATP-binding domain. Residue Asp177–Thr184 participates in ATP binding. A DEAH box motif is present at residues Asp280–His283. A Helicase C-terminal domain is found at Arg492 to Arg686.

This sequence belongs to the SNF2/RAD54 helicase family. RapA subfamily. Interacts with the RNAP. Has a higher affinity for the core RNAP than for the holoenzyme. Its ATPase activity is stimulated by binding to RNAP.

In terms of biological role, transcription regulator that activates transcription by stimulating RNA polymerase (RNAP) recycling in case of stress conditions such as supercoiled DNA or high salt concentrations. Probably acts by releasing the RNAP, when it is trapped or immobilized on tightly supercoiled DNA. Does not activate transcription on linear DNA. Probably not involved in DNA repair. The protein is RNA polymerase-associated protein RapA of Vibrio parahaemolyticus serotype O3:K6 (strain RIMD 2210633).